A 379-amino-acid chain; its full sequence is Homoserine O-succinyltransferase (379 aa).

The AB hydrolase-1 domain maps to 51 to 360 (NAVLICHALS…DAPQGHDAFL (310 aa)). Residue serine 157 is the Nucleophile of the active site. Arginine 227 contributes to the substrate binding site. Active-site residues include aspartate 323 and histidine 356. A substrate-binding site is contributed by aspartate 357.

This sequence belongs to the AB hydrolase superfamily. MetX family. As to quaternary structure, homodimer.

The protein localises to the cytoplasm. The enzyme catalyses L-homoserine + succinyl-CoA = O-succinyl-L-homoserine + CoA. It participates in amino-acid biosynthesis; L-methionine biosynthesis via de novo pathway; O-succinyl-L-homoserine from L-homoserine: step 1/1. In terms of biological role, transfers a succinyl group from succinyl-CoA to L-homoserine, forming succinyl-L-homoserine. The polypeptide is Homoserine O-succinyltransferase (Pseudomonas fluorescens (strain ATCC BAA-477 / NRRL B-23932 / Pf-5)).